The primary structure comprises 319 residues: Malate dehydrogenase (319 aa).

NAD(+)-binding positions include Gly11–Gly16 and Asp36. Positions 85 and 91 each coordinate substrate. NAD(+) contacts are provided by residues Asn98 and Val121–Asn123. Substrate is bound by residues Asn123 and Arg154. Catalysis depends on His178, which acts as the Proton acceptor.

Belongs to the LDH/MDH superfamily. MDH type 3 family.

The catalysed reaction is (S)-malate + NAD(+) = oxaloacetate + NADH + H(+). Catalyzes the reversible oxidation of malate to oxaloacetate. The chain is Malate dehydrogenase from Sulfurimonas denitrificans (strain ATCC 33889 / DSM 1251) (Thiomicrospira denitrificans (strain ATCC 33889 / DSM 1251)).